The following is a 280-amino-acid chain: MIQHAGLGYRRDLAEDFLSLSENSPICFIEAAPENWLKMGGWARKQFDRVAERLPLALHGLSMSLGGQAPLDTDLIDGIKEMMRRYDCTFFSDHLSYCHDGGHLYDLLPLPFTEEMVHHTARRIREVQDRLGCRIAVENTSYYLHSPLAEMNEVEFLNAVAREADCGIHLDVNNIYVNAVNHGLLSPEAFLENVDAERVCYIHIAGHDVETPELLIDTHGAAVLPTVWDLLELAYAKLPTIPPTLLERDFNFPPFSELEAEVAKIADYQTRAGKECRRAA.

It belongs to the UPF0276 family.

In Neisseria meningitidis serogroup B (strain ATCC BAA-335 / MC58), this protein is UPF0276 protein NMB2142.